We begin with the raw amino-acid sequence, 155 residues long: MSKKIIQVVLKENIQKLGKSNDVVKVATGYARNFLIPNKMASVATVGMLNQQKLYAAIKEKKIIFAKENARKTQQLLEEIQKFSISKKTGDGETIFGSVTEKEISQIIKNTTNVDIDKQNILIPEIKTIGLYNIEIKLFNQVTANIQLQVLPESN.

The protein belongs to the bacterial ribosomal protein bL9 family.

The protein resides in the plastid. Its subcellular location is the chloroplast. In terms of biological role, binds to the 23S rRNA. The protein is Large ribosomal subunit protein bL9c of Porphyra purpurea (Red seaweed).